A 252-amino-acid polypeptide reads, in one-letter code: Low-density lipoprotein receptor-related protein 5-like protein (252 aa).

LDL-receptor class B repeat units follow at residues 3–45 (GHVY…NWVA), 46–88 (RSLY…HPEM), 89–132 (GLTY…DLQE), 133–175 (GKLY…LGDF), and 176–218 (IYWT…DKVV). The disordered stretch occupies residues 223 to 247 (HADRNGGAATCASSRPTQPGLAAPS).

This is Low-density lipoprotein receptor-related protein 5-like protein (LRP5L) from Homo sapiens (Human).